The chain runs to 135 residues: MSEFKRLMRLKLKMKQKRPEFKRQDWFKCSRIGTSWRRPFGKHSGMRIGLTHRAAVATVGYRGPALVRGLHPSGLQDILVNNVKELVAINPEIQGARIAATVGKRKRIEIVKKANELGIRVFNVSKQKQEEFLSL.

Belongs to the eukaryotic ribosomal protein eL32 family.

The polypeptide is Large ribosomal subunit protein eL32 (Methanococcus maripaludis (strain C7 / ATCC BAA-1331)).